The chain runs to 28 residues: Mu-theraphotoxin-Hsp1a (28 aa).

3 disulfides stabilise this stretch: Cys-2–Cys-16, Cys-9–Cys-21, and Cys-15–Cys-25. Asn-28 carries the asparagine amide modification.

This sequence belongs to the neurotoxin 30 (phrixotoxin) family. As to expression, expressed by the venom gland.

It is found in the secreted. Potent and selective inhibitor of Nav1.7/SCN9A sodium channels. Inhibits Nav1.7/SCN9A peak current (IC(50)=13 nM). In vivo, does not induce visible signs of toxicity when intravenously injected into mice. This chain is Mu-theraphotoxin-Hsp1a, found in Homoeomma sp. (Peruvian tarantula).